Reading from the N-terminus, the 250-residue chain is DNA repair protein RecO (250 aa).

Belongs to the RecO family.

Involved in DNA repair and RecF pathway recombination. This Rhodopseudomonas palustris (strain ATCC BAA-98 / CGA009) protein is DNA repair protein RecO.